A 237-amino-acid chain; its full sequence is DCN1-like protein 5 (237 aa).

A phosphoserine mark is found at S9, S41, and S48. Residues 46 to 232 (FSSKKCLAWF…LLDEFVEWQK (187 aa)) enclose the DCUN1 domain.

As to quaternary structure, part of a complex that contains DCUN1D5, CUL1 and RBX1; this interaction is bridged by CUL1. Interacts (via the DCUN1 domain) with the unneddylated cullins: interacts with CUL1, CUL2, CUL3, CUL4A, CUL4B and CUL5; these interactions promote the cullin neddylation and the identity of the cullin dictates the affinity of the interaction. Interacts (via DCUN1 domain) with UBE2M (N-terminally acetylated form) and probably with UBE2F (N-terminally acetylated form). May also interact with regulators or subunits of cullin-RING ligases such as RBX1, RNF7, ELOB and DDB1; these interactions are bridged by cullins. Interacts with CAND1; this interaction is bridged by cullins and strongly inhibits the neddylation of cullins. These CAND-cullin-DCNL complexes can only be neddylated in the presence of a substrate adapter. Phosphorylation at Ser-41 is independent of cullin's interaction. Phosphorylated in response to both TICAM1 and MYD88 dependent Toll-like receptor (TLR) pathway activation. Phosphorylated in response to IL1B stimulation.

The protein localises to the nucleus. Its subcellular location is the cytoplasm. It is found in the cytoskeleton. The protein resides in the spindle. Functionally, contributes to the neddylation of all cullins by transferring NEDD8 from N-terminally acetylated NEDD8-conjugating E2s enzyme to different cullin C-terminal domain-RBX complexes which is necessary for the activation of cullin-RING E3 ubiquitin ligases (CRLs). May play a role in DNA damage response and may participate in cell proliferation and anchorage-independent cell growth. The sequence is that of DCN1-like protein 5 from Pongo abelii (Sumatran orangutan).